A 277-amino-acid polypeptide reads, in one-letter code: Small ribosomal subunit protein uS2 (277 aa).

A disordered region spans residues 1 to 78 (MSENDEGTDA…PADEEPVLDE (78 aa)).

It belongs to the universal ribosomal protein uS2 family.

The chain is Small ribosomal subunit protein uS2 from Natronomonas pharaonis (strain ATCC 35678 / DSM 2160 / CIP 103997 / JCM 8858 / NBRC 14720 / NCIMB 2260 / Gabara) (Halobacterium pharaonis).